The sequence spans 24 residues: Brevinin-1Bf (24 aa).

A disulfide bond links Cys18 and Cys24.

In terms of tissue distribution, expressed by the skin glands.

Its subcellular location is the secreted. Antibacterial activity against Gram-positive bacterium S.aureus and Gram-negative bacterium E.coli. The protein is Brevinin-1Bf of Lithobates berlandieri (Rio Grande leopard frog).